Reading from the N-terminus, the 487-residue chain is Calcium-dependent mitochondrial ATP-magnesium/phosphate carrier protein 2 (487 aa).

The Mitochondrial intermembrane portion of the chain corresponds to 1-211; the sequence is MEATKSSKQN…ISKHIKRSNY (211 aa). EF-hand domains are found at residues 36–71, 72–107, 108–138, and 139–174; these read ERDL…LQIP, SGYK…KELE, LYRI…AGIE, and IKDE…YPHE. Residues aspartate 85, asparagine 87, aspartate 89, arginine 91, and glutamate 96 each contribute to the Ca(2+) site. 4 residues coordinate Ca(2+): aspartate 152, aspartate 154, aspartate 156, and glutamate 163. 3 Solcar repeats span residues 206-289, 301-389, and 400-483; these read IKRS…FKNA, IGTT…LKDL, and PGPL…MKKS. Residues 212-229 form a helical membrane-spanning segment; that stretch reads FIAGGIAGAASRTATAPL. Residues 230-263 are Mitochondrial matrix-facing; that stretch reads DRLKVLLQIQKTDARIREAIKLIWKQGGVRGFFR. Residues 264 to 283 traverse the membrane as a helical segment; the sequence is GNGLNIVKVAPESAIKFYAY. Over 284-310 the chain is Mitochondrial intermembrane; the sequence is ELFKNAIGENMGEDKADIGTTVRLFAG. A helical membrane pass occupies residues 311–324; sequence GMAGAVAQASIYPL. Residues 325-363 lie on the Mitochondrial matrix side of the membrane; it reads DLVKTRLQTYTSQAGVAVPRLGTLTKDILVHEGPRAFYK. Residues 364–383 form a helical membrane-spanning segment; that stretch reads GLFPSLLGIIPYAGIDLAAY. The Mitochondrial intermembrane portion of the chain corresponds to 384 to 405; it reads ETLKDLSRTYILQDAEPGPLVQ. A helical membrane pass occupies residues 406 to 423; sequence LGCGTISGALGATCVYPL. At 424–457 the chain is on the mitochondrial matrix side; sequence QVVRTRMQAERARTSMSGVFRRTISEEGYRALYK. The chain crosses the membrane as a helical span at residues 458–477; it reads GLLPNLLKVVPAASITYMVY. At 478–487 the chain is on the mitochondrial intermembrane side; sequence EAMKKSLELD.

The protein belongs to the mitochondrial carrier (TC 2.A.29) family. As to expression, expressed in flowers, leaves, stems, roots and seedlings, mostly in aerial parts.

It is found in the mitochondrion inner membrane. Its activity is regulated as follows. Counter-exchange transport activity is saturable and inhibited by pyridoxal-5'-phosphate, EDTA and EGTA. Activated by calcium Ca(2+) and manganese Mn(2+) ions, and slightly by iron Fe(2+) and zinc Zn(2+) ions. Repressed by copper ions Cu(2+) and slightly by magnesium Mg(2+) ions. Magnesium Mg(2+) ions promotes slightly ATP uptake, ATP-Mg(2+) being exchanged with ATP(4-). Functionally, calcium-dependent mitochondrial carrier protein that catalyzes the import of ATP co-transported with metal divalent cations across the mitochondrial inner membrane in exchange for phosphate (Pi). Can transport phosphate, AMP, ADP, ATP, adenosine 5'-phosphosulfate, sulfate and thiosulfate, and, to a lesser extent, other nucleotides. Binds calcium ions Ca(2+). Also mediates calcium uptake. This Arabidopsis thaliana (Mouse-ear cress) protein is Calcium-dependent mitochondrial ATP-magnesium/phosphate carrier protein 2.